A 211-amino-acid polypeptide reads, in one-letter code: Tudor-interacting repair regulator protein (211 aa).

Glycyl lysine isopeptide (Lys-Gly) (interchain with G-Cter in ubiquitin) cross-links involve residues Lys-10 and Lys-151. Residues 118–205 (TLEQLHAVEI…TEKQKKALEK (88 aa)) are interaction with PXN.

Belongs to the Nudix hydrolase family. TIRR subfamily. As to quaternary structure, homodimer. Interacts with TP53BP1 (via the Tudor-like domain); interaction is abolished following DNA damage and TP53BP1 phosphorylation by ATM. Interacts (via the cytoplasmic part) with SDC4. Interacts with TGFB1I1 and PXN.

Its subcellular location is the nucleus. Key regulator of TP53BP1 required to stabilize TP53BP1 and regulate its recruitment to chromatin. In absence of DNA damage, interacts with the tandem Tudor-like domain of TP53BP1, masking the region that binds histone H4 dimethylated at 'Lys-20' (H4K20me2), thereby preventing TP53BP1 recruitment to chromatin and maintaining TP53BP1 localization to the nucleus. Following DNA damage, ATM-induced phosphorylation of TP53BP1 and subsequent recruitment of RIF1 leads to dissociate NUDT16L1/TIRR from TP53BP1, unmasking the tandem Tudor-like domain and allowing recruitment of TP53BP1 to DNA double strand breaks (DSBs). Binds U8 snoRNA. The protein is Tudor-interacting repair regulator protein of Mus musculus (Mouse).